The chain runs to 866 residues: N-alpha-acetyltransferase 15, NatA auxiliary subunit (866 aa).

4 TPR repeats span residues 46 to 79, 80 to 113, 148 to 184, and 224 to 257; these read GETL…DLKS, HVCW…DKDN, RASW…SPDK, and LAVE…NPEN. N6-acetyllysine is present on K262. Residue S302 is modified to Phosphoserine. TPR repeat units lie at residues 374–407, 409–441, and 485–518; these read LWVQ…TPTL, ELFL…DTAD, and MWFQ…FIEI. The segment at 500 to 866 is interaction with HYPK; sequence KFGEALKKCH…AEAEELANEI (367 aa). Phosphoserine is present on residues S537 and S588. Residues 579–594 show a composition bias toward basic and acidic residues; sequence EHEADTANMSDKELKK. A disordered region spans residues 579 to 642; sequence EHEADTANMS…EEIGGPKEEL (64 aa). The span at 595-604 shows a compositional bias: basic residues; that stretch reads LRNKQRRAQK. Residues 606–621 show a composition bias toward basic and acidic residues; it reads AQIEEEKKNAEKEKQQ. The Bipartite nuclear localization signal motif lies at 612-629; the sequence is KKNAEKEKQQRNQKKKKD. A TPR 8 repeat occupies 672–705; it reads IETHLFAFEIYFRKEKFLLMLQSVKRAFAIDSSH. N6-acetyllysine is present on residues K735 and K756. Phosphoserine occurs at positions 855 and 856.

Component of the N-terminal acetyltransferase A complex (also called the NatA complex) composed of NAA10 and NAA15. Within the complex interacts with NAA10. Component of the N-terminal acetyltransferase A (NatA)/HYPK complex at least composed of NAA10, NAA15 and HYPK, which has N-terminal acetyltransferase activity. In complex with NAA10, interacts with HYPK. Component of the N-terminal acetyltransferase E (NatE) complex at least composed of NAA10, NAA15 and NAA50. Within the complex interacts with NAA10; the interaction is required for binding to NAA50. Interacts with NAAT50. The interaction of the NatA complex with NAA50 reduces the acetylation activity of the NatA complex. Component of the N-terminal acetyltransferase E (NatE)/HYPK complex at least composed of NAA10, NAA15, NAA50 and HYPK. In complex with NAA10 interacts with HYPK; the interaction with HYPK reduces the capacity of the NatA complex to interact with NAA50. Interacts with NAA11. Interacts with XRCC6 and XRCC5. Cleaved by caspases during apoptosis, resulting in a stable 35 kDa fragment. As to expression, expressed at high levels in testis and in ocular endothelial cells. Also found in brain (corpus callosum), heart, colon, bone marrow and at lower levels in most adult tissues, including thyroid, liver, pancreas, mammary and salivary glands, lung, ovary, urogenital system and upper gastrointestinal tract. Overexpressed in gastric cancer, in papillary thyroid carcinomas and in a Burkitt lymphoma cell line (Daudi). Specifically suppressed in abnormal proliferating blood vessels in eyes of patients with proliferative diabetic retinopathy.

It localises to the cytoplasm. It is found in the nucleus. In terms of biological role, auxillary subunit of N-terminal acetyltransferase complexes which display alpha (N-terminal) acetyltransferase (NAT) activity. The NAT activity may be important for vascular, hematopoietic and neuronal growth and development. Required to control retinal neovascularization in adult ocular endothelial cells. In complex with XRCC6 and XRCC5 (Ku80), up-regulates transcription from the osteocalcin promoter. In Homo sapiens (Human), this protein is N-alpha-acetyltransferase 15, NatA auxiliary subunit (NAA15).